Here is a 490-residue protein sequence, read N- to C-terminus: Protein nucleotidyltransferase YdiU (490 aa).

Residues Gly-94, Gly-96, Arg-97, Lys-117, Asp-129, Gly-130, Arg-180, and Arg-187 each contribute to the ATP site. Asp-256 functions as the Proton acceptor in the catalytic mechanism. Residues Asn-257 and Asp-266 each coordinate Mg(2+). Position 266 (Asp-266) interacts with ATP.

This sequence belongs to the SELO family. Mg(2+) is required as a cofactor. It depends on Mn(2+) as a cofactor.

It catalyses the reaction L-seryl-[protein] + ATP = 3-O-(5'-adenylyl)-L-seryl-[protein] + diphosphate. The catalysed reaction is L-threonyl-[protein] + ATP = 3-O-(5'-adenylyl)-L-threonyl-[protein] + diphosphate. It carries out the reaction L-tyrosyl-[protein] + ATP = O-(5'-adenylyl)-L-tyrosyl-[protein] + diphosphate. The enzyme catalyses L-histidyl-[protein] + UTP = N(tele)-(5'-uridylyl)-L-histidyl-[protein] + diphosphate. It catalyses the reaction L-seryl-[protein] + UTP = O-(5'-uridylyl)-L-seryl-[protein] + diphosphate. The catalysed reaction is L-tyrosyl-[protein] + UTP = O-(5'-uridylyl)-L-tyrosyl-[protein] + diphosphate. Functionally, nucleotidyltransferase involved in the post-translational modification of proteins. It can catalyze the addition of adenosine monophosphate (AMP) or uridine monophosphate (UMP) to a protein, resulting in modifications known as AMPylation and UMPylation. The chain is Protein nucleotidyltransferase YdiU from Clostridium perfringens (strain 13 / Type A).